A 90-amino-acid chain; its full sequence is Mucin-like protein 1 (90 aa).

Positions 1-20 are cleaved as a signal peptide; that stretch reads MKFLAVLVLLGVSIFLVSAQ. Thr-23, Thr-24, Thr-30, Thr-34, Thr-46, Thr-47, Thr-51, Thr-52, Thr-54, Thr-55, Thr-59, Thr-60, Thr-62, and Thr-63 each carry an O-linked (GalNAc...) threonine glycan. Composition is skewed to low complexity over residues 25–36 and 44–68; these read AAPADTYPATGP and AETTAAATTATTAAPTTATTAASTT. The tract at residues 25 to 68 is disordered; sequence AAPADTYPATGPADDEAPDAETTAAATTATTAAPTTATTAASTT. 3 repeat units span residues 46–53, 54–61, and 62–69. A 3 X 8 AA tandem repeat of T-T-A-A-[APS]-T-T-A region spans residues 46-69; the sequence is TTAAATTATTAAPTTATTAASTTA. Ser-66 is a glycosylation site (O-linked (GalNAc...) serine). O-linked (GalNAc...) threonine glycosylation is found at Thr-67 and Thr-68.

Post-translationally, O-glycosylated. As to expression, expressed in mammary, salivary glands and prostate. Also detected in lung. Mainly expressed in cancer cell lines of breast origin. Highly expressed in lymph node-positive compared with node-negative tumors. Detected in all lymph node containing metastatic cells.

It is found in the secreted. It localises to the membrane. May play a role as marker for the diagnosis of metastatic breast cancer. The sequence is that of Mucin-like protein 1 (MUCL1) from Homo sapiens (Human).